Reading from the N-terminus, the 557-residue chain is Hepatocyte nuclear factor 1-beta (557 aa).

Residues 1–31 are dimerization; it reads MVSKLTSLQQELLSALLSSGVTKEVLIQALE. The HNF-p1 domain maps to 1 to 32; the sequence is MVSKLTSLQQELLSALLSSGVTKEVLIQALEE. Phosphoserine occurs at positions 49, 52, 75, and 80. The segment at 66–85 is disordered; that stretch reads TNGHAKGRLSGDEGSEDGDD. The 96-residue stretch at 93 to 188 folds into the POU-specific atypical domain; it reads KELQALNTEE…ILRQFNQTVQ (96 aa). Residues 231–311 constitute a DNA-binding region (homeobox; HNF1-type); the sequence is MRRNRFKWGP…NRRKEEAFRQ (81 aa). The segment at 324-370 is disordered; the sequence is HNLNPLLTHGSPHHQPSSSPPNKLSGVRYSQPGNNEVTSSSTISHHG. A compositionally biased stretch (polar residues) spans 354–370; it reads QPGNNEVTSSSTISHHG.

It belongs to the HNF1 homeobox family. As to quaternary structure, binds DNA as a dimer. Can form homodimer or heterodimer with HNF1-alpha. Interacts (via HNF-p1 domain) with PCBD1; the interaction increases its transactivation activity. As to expression, liver, kidney and intestine.

The protein localises to the nucleus. In terms of biological role, transcription factor that binds to the inverted palindrome 5'-GTTAATNATTAAC-3'. Binds to the FPC element in the cAMP regulatory unit of the PLAU gene. Transcriptional activity is increased by coactivator PCBD1. This is Hepatocyte nuclear factor 1-beta (Hnf1b) from Rattus norvegicus (Rat).